Consider the following 428-residue polypeptide: Serine--tRNA ligase (428 aa).

L-serine is bound at residue 231 to 233 (TAE). 262 to 264 (RAE) contributes to the ATP binding site. E285 lines the L-serine pocket. Position 349–352 (349–352 (EISS)) interacts with ATP. S385 provides a ligand contact to L-serine.

It belongs to the class-II aminoacyl-tRNA synthetase family. Type-1 seryl-tRNA synthetase subfamily. Homodimer. The tRNA molecule binds across the dimer.

Its subcellular location is the cytoplasm. The catalysed reaction is tRNA(Ser) + L-serine + ATP = L-seryl-tRNA(Ser) + AMP + diphosphate + H(+). It carries out the reaction tRNA(Sec) + L-serine + ATP = L-seryl-tRNA(Sec) + AMP + diphosphate + H(+). Its pathway is aminoacyl-tRNA biosynthesis; selenocysteinyl-tRNA(Sec) biosynthesis; L-seryl-tRNA(Sec) from L-serine and tRNA(Sec): step 1/1. Functionally, catalyzes the attachment of serine to tRNA(Ser). Is also able to aminoacylate tRNA(Sec) with serine, to form the misacylated tRNA L-seryl-tRNA(Sec), which will be further converted into selenocysteinyl-tRNA(Sec). In Methylorubrum extorquens (strain CM4 / NCIMB 13688) (Methylobacterium extorquens), this protein is Serine--tRNA ligase.